Reading from the N-terminus, the 637-residue chain is Transcription factor GLABRA 3 (637 aa).

The region spanning 437–486 (DETGNHAVLEKKRREKLNERFMTLRKIIPSINKIDKVSILDDTIEYLQEL) is the bHLH domain. A disordered region spans residues 497 to 521 (RESTDTETRGTMTMKRKKPCDAGER). The interval 541 to 637 (NVGEAEPADT…EALQRVAWIC (97 aa)) is binding with MYB0/GL1 and MYB23.

As to quaternary structure, efficient DNA binding requires dimerization with another bHLH protein. Homodimer and heterodimer with BHLH2. Interacts directly with TTG1 and MYB0/GL1 to form a complex. Its interaction with TRY prevents MYB0/GL1 binding. Interacts with MYB75/PAP1, MYB90/PAP2, TT2, CPC, MYB23 and MYB66/WER. Interacts with MYB82. As to expression, mostly expressed in roots and flowers. Also present in stems and leaves, and, to a lower extent, in hypocotyls. Expressed in epidermal root hair cells (trichoblasts) and moves to root hairless cells (atrichoblasts) by a cell-to-cell movement through plasmodesmata (at protein level).

It localises to the nucleus. Functionally, transcription activator, when associated with MYB75/PAP1, MYB90/PAP2 or TT2. Involved in epidermal cell fate specification. Negatively regulates stomata formation, but, in association with TTG1 and MYB0/GL1, promotes trichome formation, branching and endoreplication. Also regulates trichome cell wall maturation. Together with MYB66/WER, promotes the formation of non-hair cells in root epidermis cells in the N position. Whereas together with CPC, promotes the formation of hair cells in root epidermis cells in the H position by inhibiting non-hair cell formation. Also seems to play a role in the activation of anthocyanin biosynthesis, probably together with MYB75/PAP1. Activates the transcription of GL2. This chain is Transcription factor GLABRA 3 (GL3), found in Arabidopsis thaliana (Mouse-ear cress).